We begin with the raw amino-acid sequence, 131 residues long: Small ribosomal subunit protein bS6 (131 aa).

The tract at residues 98–131 (EASPMVKAKDERRERREDFANETSEETEAGDSEE) is disordered. Over residues 104–116 (KAKDERRERREDF) the composition is skewed to basic and acidic residues. A compositionally biased stretch (acidic residues) spans 120–131 (TSEETEAGDSEE).

This sequence belongs to the bacterial ribosomal protein bS6 family.

Binds together with bS18 to 16S ribosomal RNA. The chain is Small ribosomal subunit protein bS6 from Edwardsiella ictaluri (strain 93-146).